The chain runs to 111 residues: MFKATARYIRVQPRKARLAAGLMRNLSVTEAQQQLSFSQLKAGRCLKKVLDSAVANAELHDNVKREKLNVIEVRVDAGPVYKRAKSKSRGGRSPILKRTSHLTVIVGEKER.

It belongs to the universal ribosomal protein uL22 family. In terms of assembly, part of the 50S ribosomal subunit.

Its function is as follows. This protein binds specifically to 23S rRNA; its binding is stimulated by other ribosomal proteins, e.g. L4, L17, and L20. It is important during the early stages of 50S assembly. It makes multiple contacts with different domains of the 23S rRNA in the assembled 50S subunit and ribosome. In terms of biological role, the globular domain of the protein is located near the polypeptide exit tunnel on the outside of the subunit, while an extended beta-hairpin is found that lines the wall of the exit tunnel in the center of the 70S ribosome. This is Large ribosomal subunit protein uL22 from Chlamydia abortus (strain DSM 27085 / S26/3) (Chlamydophila abortus).